The chain runs to 403 residues: Spindle assembly abnormal protein 5 (403 aa).

Disordered stretches follow at residues 24 to 79 and 96 to 127; these read PRVF…AHPA and TVEG…ENWR. The segment covering 116-127 has biased composition (basic and acidic residues); sequence RMTEENQEENWR. The stretch at 128–163 forms a coiled coil; the sequence is DVMKNEFEVMRKEMQEEATKKQEELNAQNLNKMQEM. Disordered stretches follow at residues 174–205, 255–276, 302–325, and 355–403; these read AKPS…ANKI, AYSP…SSGN, RQWT…PDPQ, and YHVE…SRRK. The span at 177-194 shows a compositional bias: basic and acidic residues; it reads SAEESQDREKENWYEQSR. Residues 305 to 321 show a composition bias toward basic and acidic residues; the sequence is TSERNDNRTHDNYRPYE. Residues 360-369 show a composition bias toward acidic residues; the sequence is VPEYEEEETE. The span at 379–403 shows a compositional bias: basic and acidic residues; sequence YHEPMETESAAERERRIREKYSRRK.

As to quaternary structure, interacts with sas-6 via its coiled coil domain.

The protein resides in the cytoplasm. It localises to the cytoskeleton. Its subcellular location is the microtubule organizing center. The protein localises to the centrosome. It is found in the centriole. Functionally, required for centrosome duplication. Essential for daughter-centriole formation. Requires both maternal and partenal expression, suggesting that it regulates centriole duplication during both spermatogenesis and early embryogenesis. This is Spindle assembly abnormal protein 5 (sas-5) from Caenorhabditis briggsae.